Here is an 802-residue protein sequence, read N- to C-terminus: Penicillin G acylase (802 aa).

Residues 1-24 form the signal peptide; the sequence is MKTKWLISVIILFVFIFPQNLVFA. E177 is a binding site for Ca(2+). A propeptide spans 235 to 265 (spacer peptide); the sequence is SAVIKASEKVGKERENFVQTSEELGLPLKIG. S266 acts as the Nucleophile in catalysis. Residue D341 participates in Ca(2+) binding.

Belongs to the peptidase S45 family. In terms of assembly, heterodimer of an alpha subunit and a beta subunit processed from the same precursor. Ca(2+) is required as a cofactor.

It localises to the secreted. The catalysed reaction is a penicillin + H2O = 6-aminopenicillanate + a carboxylate. The protein is Penicillin G acylase (pac) of Priestia megaterium (Bacillus megaterium).